The primary structure comprises 974 residues: Alpha-1,4 glucan phosphorylase L-2 isozyme, chloroplastic/amyloplastic (974 aa).

The N-terminal 81 residues, 1–81 (MATFAVSGLN…LDVFQPDSTS (81 aa)), are a transit peptide targeting the chloroplast. A disordered region spans residues 509–551 (ADVEKAADEEQEEEGKDDSKDEETEAVKAETTNEEEETEVKKV). The span at 517 to 532 (EEQEEEGKDDSKDEET) shows a compositional bias: acidic residues. The residue at position 820 (K820) is an N6-(pyridoxal phosphate)lysine.

The protein belongs to the glycogen phosphorylase family. The cofactor is pyridoxal 5'-phosphate. As to expression, leaves.

The protein resides in the plastid. The protein localises to the chloroplast. Its subcellular location is the amyloplast. It catalyses the reaction [(1-&gt;4)-alpha-D-glucosyl](n) + phosphate = [(1-&gt;4)-alpha-D-glucosyl](n-1) + alpha-D-glucose 1-phosphate. Functionally, phosphorylase is an important allosteric enzyme in carbohydrate metabolism. Enzymes from different sources differ in their regulatory mechanisms and in their natural substrates. However, all known phosphorylases share catalytic and structural properties. The chain is Alpha-1,4 glucan phosphorylase L-2 isozyme, chloroplastic/amyloplastic (STP-1) from Solanum tuberosum (Potato).